Here is a 1017-residue protein sequence, read N- to C-terminus: Adhesion G-protein coupled receptor G2 (1017 aa).

The signal sequence occupies residues 1–37; it reads MVFSVRQCGHVGRTEEVLLTFKIFLVIICLHVVLVTS. Over 38-627 the chain is Extracellular; that stretch reads LEEDTDNSSL…TSVLPAQMMA (590 aa). N-linked (GlcNAc...) asparagine glycosylation is found at Asn44, Asn85, Asn99, Asn111, Asn117, Asn144, Asn162, Asn186, and Asn194. Residues 301–366 are disordered; sequence PLSPQPSAPI…NTTSAPPVQT (66 aa). Residues 308-320 show a composition bias toward low complexity; the sequence is APIASSPAIDMPP. Composition is skewed to polar residues over residues 321 to 335 and 344 to 366; these read QSETISSPMPQTHVS and SFSSPTVSAPANVNTTSAPPVQT. N-linked (GlcNAc...) asparagine glycans are attached at residues Asn357, Asn370, Asn435, Asn438, Asn456, Asn461, Asn528, Asn542, Asn547, Asn551, and Asn597. Residues 462 to 619 enclose the GAIN-B domain; it reads TTTFVAQDPA…GVLLDLSRTS (158 aa). 2 disulfide bridges follow: Cys570–Cys601 and Cys589–Cys603. The segment at 570-619 is GPS; the sequence is CVFWDLGRNGGRGGWSDNGCSVKDRRLNETICTCSHLTSFGVLLDLSRTS. The interval 608 to 619 is stachel; the sequence is SFGVLLDLSRTS. Residues 628–648 form a helical membrane-spanning segment; the sequence is LTFITYIGCGLSSIFLSVTLV. At 649 to 667 the chain is on the cytoplasmic side; the sequence is TYIAFEKIRRDYPSKILIQ. The chain crosses the membrane as a helical span at residues 668 to 688; the sequence is LCAALLLLNLVFLLDSWIALY. Over 689-693 the chain is Extracellular; it reads KMQGL. A helical membrane pass occupies residues 694-714; it reads CISVAVFLHYFLLVSFTWMGL. Cysteines 694 and 778 form a disulfide. Topologically, residues 715–737 are cytoplasmic; the sequence is EAFHMYLALVKVFNTYIRKYILK. Residues 738-758 form a helical membrane-spanning segment; the sequence is FCIVGWGVPAVVVTIILTISP. The Extracellular segment spans residues 759 to 789; it reads DNYGLGSYGKFPNGSPDDFCWINNNAVFYIT. A helical transmembrane segment spans residues 790 to 810; it reads VVGYFCVIFLLNVSMFIVVLV. Over 811-834 the chain is Cytoplasmic; it reads QLCRIKKKKQLGAQRKTSIQDLRS. The helical transmembrane segment at 835-855 threads the bilayer; the sequence is IAGLTFLLGITWGFAFFAWGP. Over 856 to 857 the chain is Extracellular; it reads VN. A glycan (N-linked (GlcNAc...) asparagine) is linked at Asn857. Residues 858–878 traverse the membrane as a helical segment; sequence VTFMYLFAIFNTLQGFFIFIF. Asn868 is a 3beta-hydroxyandrost-5-en-17-one binding site. Residues 879 to 1017 are Cytoplasmic-facing; the sequence is YCVAKENVRK…RGSLHFIEQM (139 aa). The segment at 918-939 is disordered; the sequence is QTVNQGVSSSSNSLQSSSNSTN. Phosphoserine is present on Ser1010.

It belongs to the G-protein coupled receptor 2 family. Adhesion G-protein coupled receptor (ADGR) subfamily. Heterodimer of 2 chains generated by proteolytic processing; the large extracellular N-terminal fragment and the membrane-bound C-terminal fragment predominantly remain associated and non-covalently linked. Interacts with CFTR. Post-translationally, proteolytically cleaved into 2 subunits, an extracellular subunit and a seven-transmembrane subunit. Highly glycosylated. Epididymis-specific expression (at protein level). Both subunits are associated with apical membranes of efferent ductule and proximal epididymal duct epithelia. Mainly expressed in the nonciliated principal cells of the proximal excurrent ducts. Specifically over-expressed in Ewing sarcomas but also up-regulated in a number of carcinomas derived from prostate, kidney or lung.

The protein resides in the apical cell membrane. With respect to regulation, forms a heterodimer of 2 chains generated by proteolytic processing that remain associated through non-covalent interactions mediated by the GAIN-B domain. In the inactivated receptor, the Stachel sequence (also named stalk) is embedded in the GAIN-B domain, where it adopts a beta-strand conformation. On activation, the Stachel moves into the 7 transmembrane region and adopts a twisted hook-shaped configuration that forms contacts within the receptor, leading to coupling of a G-alpha protein, which activates signaling. The cleaved GAIN-B and N-terminal domains can then dissociate from the rest of the receptor. Deoxycorticosterone (DOC) acts as an antagonist of ADGRG2. In terms of biological role, adhesion G-protein coupled receptor (aGPCR) for steroid hormones, such as dehydroepiandrosterone (DHEA; also named 3beta-hydroxyandrost-5-en-17-one) and androstenedione. Involved in a signal transduction pathway controlling epididymal function and male fertility. Ligand binding causes a conformation change that triggers signaling via guanine nucleotide-binding proteins (G proteins) and modulates the activity of downstream effectors, such as adenylate cyclase. ADGRG2 is coupled to G(s) G proteins and mediates activation of adenylate cyclase activity. Also able to couple with G(q) G proteins in vitro. Together with CFTR, required to promote fluid reabsorption within efferent ductule. The sequence is that of Adhesion G-protein coupled receptor G2 from Homo sapiens (Human).